Consider the following 599-residue polypeptide: Sulfite reductase [NADPH] flavoprotein alpha-component (599 aa).

The Flavodoxin-like domain maps to 64–202; that stretch reads VTLISASQTG…AASEWRARVV (139 aa). FMN-binding positions include 70–75, 117–120, and 153–162; these read SQTGNA, STQG, and LGDTSYEFFC. Positions 234–448 constitute an FAD-binding FR-type domain; sequence DAPLAATLSV…IEHNDNFRLP (215 aa). Residues T322, A356, 386 to 389, 404 to 406, Y410, and 419 to 422 each bind FAD; these read RLYS, TVG, and GGAS. Residues 519–520, 525–529, and D561 contribute to the NADP(+) site; these read SR and KIYVQ. Y599 contributes to the FAD binding site.

This sequence belongs to the NADPH-dependent sulphite reductase flavoprotein subunit CysJ family. In the N-terminal section; belongs to the flavodoxin family. The protein in the C-terminal section; belongs to the flavoprotein pyridine nucleotide cytochrome reductase family. In terms of assembly, alpha(8)-beta(8). The alpha component is a flavoprotein, the beta component is a hemoprotein. FAD serves as cofactor. The cofactor is FMN.

The catalysed reaction is hydrogen sulfide + 3 NADP(+) + 3 H2O = sulfite + 3 NADPH + 4 H(+). It participates in sulfur metabolism; hydrogen sulfide biosynthesis; hydrogen sulfide from sulfite (NADPH route): step 1/1. Functionally, component of the sulfite reductase complex that catalyzes the 6-electron reduction of sulfite to sulfide. This is one of several activities required for the biosynthesis of L-cysteine from sulfate. The flavoprotein component catalyzes the electron flow from NADPH -&gt; FAD -&gt; FMN to the hemoprotein component. This Salmonella paratyphi B (strain ATCC BAA-1250 / SPB7) protein is Sulfite reductase [NADPH] flavoprotein alpha-component.